The chain runs to 422 residues: UDP-N-acetylglucosamine 1-carboxyvinyltransferase (422 aa).

A phosphoenolpyruvate-binding site is contributed by 22-23; the sequence is KN. A UDP-N-acetyl-alpha-D-glucosamine-binding site is contributed by arginine 92. Cysteine 116 functions as the Proton donor in the catalytic mechanism. A 2-(S-cysteinyl)pyruvic acid O-phosphothioketal modification is found at cysteine 116. UDP-N-acetyl-alpha-D-glucosamine-binding positions include 121 to 125, aspartate 307, and leucine 329; that span reads RPVDL.

This sequence belongs to the EPSP synthase family. MurA subfamily.

It is found in the cytoplasm. It carries out the reaction phosphoenolpyruvate + UDP-N-acetyl-alpha-D-glucosamine = UDP-N-acetyl-3-O-(1-carboxyvinyl)-alpha-D-glucosamine + phosphate. It participates in cell wall biogenesis; peptidoglycan biosynthesis. Its function is as follows. Cell wall formation. Adds enolpyruvyl to UDP-N-acetylglucosamine. In Aliarcobacter butzleri (strain RM4018) (Arcobacter butzleri), this protein is UDP-N-acetylglucosamine 1-carboxyvinyltransferase.